Here is a 290-residue protein sequence, read N- to C-terminus: CTP-dependent diacylglycerol kinase 1 (290 aa).

A disordered region spans residues 1–33; that stretch reads MGTEDAIALPNSTLEPRTEAKQRLSSKSHQVSA. Over 1 to 77 the chain is Lumenal; it reads MGTEDAIALP…FITKHEIPRK (77 aa). A glycan (N-linked (GlcNAc...) asparagine) is linked at asparagine 11. Residues 23 to 33 show a composition bias toward polar residues; sequence RLSSKSHQVSA. A phosphoserine mark is found at serine 44, serine 45, and serine 46. A helical transmembrane segment spans residues 78 to 95; sequence VFHSSIGFITLYLYTQGI. Residues 96–103 lie on the Cytoplasmic side of the membrane; the sequence is NYKNVLWP. Residues 104–124 traverse the membrane as a helical segment; the sequence is LIYAFIILFILDLIRLNWPFF. The Lumenal segment spans residues 125–140; sequence NMLYCRTVGALMRKKE. A helical membrane pass occupies residues 141–161; the sequence is IHTYNGVLWYILGLIFSFNFF. The Cytoplasmic segment spans residues 162–163; sequence SK. A helical membrane pass occupies residues 164-184; sequence DVTLISLFLLSWSDTAAATIG. At 185 to 203 the chain is on the lumenal side; that stretch reads RKYGHLTPKVARNKSLAGS. An N-linked (GlcNAc...) asparagine glycan is attached at asparagine 197. A helical transmembrane segment spans residues 204-224; that stretch reads IAAFTVGVITCWVFYGYFVPA. Over 225–244 the chain is Cytoplasmic; the sequence is YSYVNKPGEIQWSPETSRLS. Residues 245–265 traverse the membrane as a helical segment; sequence LNMLSLLGGVVAALSEGIDLF. Residues 266–290 lie on the Lumenal side of the membrane; sequence NWDDNFTIPVLSSLFMNAVIKTFKK. Residue asparagine 270 is glycosylated (N-linked (GlcNAc...) asparagine).

This sequence belongs to the DGK1 family. Ca(2+) is required as a cofactor. It depends on Mg(2+) as a cofactor. Post-translationally, CKII-mediated phosphorylation of Ser-45 and Ser-46 regulates its function in the production of PA.

It localises to the endoplasmic reticulum membrane. It is found in the nucleus membrane. It catalyses the reaction a 1,2-diacyl-sn-glycerol + CTP = a 1,2-diacyl-sn-glycero-3-phosphate + CDP + H(+). It carries out the reaction 1,2-di-(9Z-octadecenoyl)-sn-glycerol + CTP = 1,2-di-(9Z-octadecenoyl)-sn-glycero-3-phosphate + CDP + H(+). With respect to regulation, inhibited by N-ethylmaleimide, dCTP, and sphingoid bases including sphinganine, sphingosine and phytosphingosine. DAG pyrophosphate, cardiolipin, CDP-DAG, and lyso-PA inhibited activity by 23-66%. Also inhibited by Ca(2+) concentrations of more than 1 mM, by addition of EDTA or EGTA at 5 mM, and by 5 mM Mn(2+) and Zn(2+). Stimulated by major membrane phospholipids including phosphatidylcholine, phosphatidylethanolamine, phosphatidylinositol, phosphatidylserine, phosphatidylglycerol, and phosphatidate. Also stimulated to a maximum by addition of TritonX-100 at a concentration of 1 mM, followed by an apparent inhibition of activity at concentrations above 1 mM. In terms of biological role, CTP-dependent diacylglycerol kinase that catalyzes the phosphorylation of diacylglycerol (DAG) to phosphatidate (PA). Controls phosphatidate levels at the nuclear envelope. Counteracts the activity of PA phosphatase PAH1/SMP2, controlling the levels of PA and DAG for the synthesis of triacylglycerol and membrane phospholipids. May be involved in vesicle trafficking between the endoplasmic reticulum and the Golgi apparatus. Required to convert triacylglycerol-derived DAG to PA for phospholipid synthesis during growth resumption from stationary phase in the absence of de novo fatty acid synthesis. Involved in the resistance to nickel chloride and nalidixic acid. In Saccharomyces cerevisiae (strain ATCC 204508 / S288c) (Baker's yeast), this protein is CTP-dependent diacylglycerol kinase 1 (DGK1).